A 682-amino-acid polypeptide reads, in one-letter code: Serine/threonine-protein kinase PLK2 (682 aa).

A disordered region spans residues 25–67 (ACGGDSKKKRPQQPSEDGQSQAQVTPAAPHHHHHHSHSGPEIS). Positions 36–48 (QQPSEDGQSQAQV) are enriched in polar residues. A Protein kinase domain is found at 79–331 (YCRGKVLGKG…LDDIIRHDFF (253 aa)). ATP contacts are provided by residues 85-93 (LGKGGFAKC) and Lys-108. Residue Asp-202 is the Proton acceptor of the active site. A Phosphothreonine modification is found at Thr-236. The tract at residues 402–430 (TSITQQPSKHRTDEELQPPPTTFAKSGTS) is disordered. 2 consecutive POLO box domains span residues 500–578 (WVTK…YMEE) and 598–682 (YLLQ…QRCN).

This sequence belongs to the protein kinase superfamily. Ser/Thr protein kinase family. CDC5/Polo subfamily. In terms of assembly, interacts with CIB1. Interacts with NSF; causing NSF dissociation from GRIA2. Post-translationally, catalytic activity is enhanced by phosphorylation of Thr-236.

It localises to the cytoplasm. It is found in the cytoskeleton. The protein localises to the microtubule organizing center. The protein resides in the centrosome. Its subcellular location is the centriole. It localises to the cell projection. It is found in the dendrite. The enzyme catalyses L-seryl-[protein] + ATP = O-phospho-L-seryl-[protein] + ADP + H(+). The catalysed reaction is L-threonyl-[protein] + ATP = O-phospho-L-threonyl-[protein] + ADP + H(+). Its activity is regulated as follows. Activated by phosphorylation of Thr-236. Once activated, activity is stimulated by binding target proteins. Functionally, tumor suppressor serine/threonine-protein kinase involved in synaptic plasticity, centriole duplication and G1/S phase transition. Polo-like kinases act by binding and phosphorylating proteins that are already phosphorylated on a specific motif recognized by the POLO box domains. Phosphorylates CPAP, NPM1, RAPGEF2, RASGRF1, SNCA, SIPA1L1 and SYNGAP1. Plays a key role in synaptic plasticity and memory by regulating the Ras and Rap protein signaling: required for overactivity-dependent spine remodeling by phosphorylating the Ras activator RASGRF1 and the Rap inhibitor SIPA1L1 leading to their degradation by the proteasome. Conversely, phosphorylates the Rap activator RAPGEF2 and the Ras inhibitor SYNGAP1, promoting their activity. Also regulates synaptic plasticity independently of kinase activity, via its interaction with NSF that disrupts the interaction between NSF and the GRIA2 subunit of AMPARs, leading to a rapid rundown of AMPAR-mediated current that occludes long term depression. Required for procentriole formation and centriole duplication by phosphorylating CPAP and NPM1, respectively. Its induction by p53/TP53 suggests that it may participate in the mitotic checkpoint following stress. This is Serine/threonine-protein kinase PLK2 (Plk2) from Rattus norvegicus (Rat).